Here is a 330-residue protein sequence, read N- to C-terminus: Phosphate acyltransferase (330 aa).

It belongs to the PlsX family. As to quaternary structure, homodimer. Probably interacts with PlsY.

It is found in the cytoplasm. The enzyme catalyses a fatty acyl-[ACP] + phosphate = an acyl phosphate + holo-[ACP]. Its pathway is lipid metabolism; phospholipid metabolism. Functionally, catalyzes the reversible formation of acyl-phosphate (acyl-PO(4)) from acyl-[acyl-carrier-protein] (acyl-ACP). This enzyme utilizes acyl-ACP as fatty acyl donor, but not acyl-CoA. The polypeptide is Phosphate acyltransferase (Streptococcus pneumoniae (strain 70585)).